A 656-amino-acid polypeptide reads, in one-letter code: tRNA 5-methylaminomethyl-2-thiouridine biosynthesis bifunctional protein MnmC (656 aa).

The tRNA (mnm(5)s(2)U34)-methyltransferase stretch occupies residues M1–A236. The interval I260–S656 is FAD-dependent cmnm(5)s(2)U34 oxidoreductase.

The protein in the N-terminal section; belongs to the methyltransferase superfamily. tRNA (mnm(5)s(2)U34)-methyltransferase family. This sequence in the C-terminal section; belongs to the DAO family. Requires FAD as cofactor.

It is found in the cytoplasm. The catalysed reaction is 5-aminomethyl-2-thiouridine(34) in tRNA + S-adenosyl-L-methionine = 5-methylaminomethyl-2-thiouridine(34) in tRNA + S-adenosyl-L-homocysteine + H(+). Functionally, catalyzes the last two steps in the biosynthesis of 5-methylaminomethyl-2-thiouridine (mnm(5)s(2)U) at the wobble position (U34) in tRNA. Catalyzes the FAD-dependent demodification of cmnm(5)s(2)U34 to nm(5)s(2)U34, followed by the transfer of a methyl group from S-adenosyl-L-methionine to nm(5)s(2)U34, to form mnm(5)s(2)U34. This is tRNA 5-methylaminomethyl-2-thiouridine biosynthesis bifunctional protein MnmC from Paraburkholderia phytofirmans (strain DSM 17436 / LMG 22146 / PsJN) (Burkholderia phytofirmans).